Consider the following 531-residue polypeptide: Beta-hexosaminidase subunit beta (531 aa).

Residues 1 to 24 (MRHRGLGLAALLALLAAVAPRSSA) form the signal peptide. The N-linked (GlcNAc...) asparagine glycan is linked to asparagine 50. Cysteines 65 and 111 form a disulfide. N-linked (GlcNAc...) asparagine glycans are attached at residues asparagine 116, asparagine 164, and asparagine 301. Disulfide bonds link cysteine 283/cysteine 334 and cysteine 508/cysteine 525. Residue glutamate 329 is the Proton donor of the active site.

It belongs to the glycosyl hydrolase 20 family. There are 3 forms of beta-hexosaminidase: hexosaminidase A is a heterodimer composed of one subunit alpha and one subunit beta (chain A and B); hexosaminidase B is a homodimer of two beta subunits (two chains A and B); hexosaminidase S is a homodimer of two alpha subunits. The composition of the dimer (isozyme A versus isozyme S) has a significant effect on the substrate specificity of the alpha subunit active site.

It is found in the lysosome. It localises to the cytoplasmic vesicle. The protein localises to the secretory vesicle. Its subcellular location is the cortical granule. The catalysed reaction is Hydrolysis of terminal non-reducing N-acetyl-D-hexosamine residues in N-acetyl-beta-D-hexosaminides.. It carries out the reaction N-acetyl-beta-D-galactosaminyl-(1-&gt;4)-beta-D-3-sulfogalactosyl-(1-&gt;4)-beta-D-glucosyl-(1&lt;-&gt;1')-ceramide + H2O = a beta-D-3-sulfogalactosyl-(1-&gt;4)-beta-D-glucosyl-(1&lt;-&gt;1')-ceramide + N-acetyl-beta-D-galactosamine. It catalyses the reaction a ganglioside GM2 (d18:1(4E)) + H2O = a ganglioside GM3 (d18:1(4E)) + N-acetyl-beta-D-galactosamine. The enzyme catalyses a ganglioside GM2 + H2O = a ganglioside GM3 + N-acetyl-beta-D-galactosamine. The catalysed reaction is beta-D-GalNAc-(1-&gt;4)-alpha-L-IdoA-(1-&gt;3)-beta-D-GalNAc-4-sulfate-(1-&gt;4)-alpha-L-IdoA-(1-&gt;3)-D-GalNAc-4-sulfate + H2O = alpha-L-IdoA-(1-&gt;3)-beta-D-GalNAc-4-sulfate-(1-&gt;4)-alpha-L-IdoA-(1-&gt;3)-D-GalNAc-4-sulfate + N-acetyl-D-galactosamine. It carries out the reaction N-acetyl-beta-D-6-sulfogalactosaminyl-(1-&gt;4)-alpha-L-iduronyl-(1-&gt;3)-N-acetyl-D-6-sulfogalactosamine + H2O = alpha-L-iduronyl-(1-&gt;3)-N-acetyl-D-6-sulfogalactosamine + N-acetyl-D-6-sulfogalactosamine. Addition of GM2A stimulates the hydrolysis of sulfated glycosphingolipid SM2 and the ganglioside GM2. Its function is as follows. Hydrolyzes the non-reducing end N-acetyl-D-hexosamine and/or sulfated N-acetyl-D-hexosamine of glycoconjugates, such as the oligosaccharide moieties from proteins and neutral glycolipids, or from certain mucopolysaccharides. The isozyme B does not hydrolyze each of these substrates, however hydrolyzes efficiently neutral oligosaccharide. Only the isozyme A is responsible for the degradation of GM2 gangliosides in the presence of GM2A. During fertilization is responsible, at least in part, for the zona block to polyspermy. Present in the cortical granules of non-activated oocytes, is exocytosed during the cortical reaction in response to oocyte activation and inactivates the sperm galactosyltransferase-binding site, accounting for the block in sperm binding to the zona pellucida. The chain is Beta-hexosaminidase subunit beta from Felis catus (Cat).